We begin with the raw amino-acid sequence, 570 residues long: Phosphoribosylaminoimidazole carboxylase (570 aa).

The ATP-grasp domain occupies 110–297 (KQHLVKNRIP…QFEAHLRAIL (188 aa)). Residue 137-192 (GSSLGYPFVLKSRTLAYDGRGNFVVKSEEDIEKGLEFLANRPLYAEKWASFKKELS) participates in ATP binding.

It in the C-terminal section; belongs to the AIR carboxylase family. Class I subfamily.

It carries out the reaction 5-amino-1-(5-phospho-D-ribosyl)imidazole-4-carboxylate + H(+) = 5-amino-1-(5-phospho-beta-D-ribosyl)imidazole + CO2. Its pathway is purine metabolism; IMP biosynthesis via de novo pathway; 5-amino-1-(5-phospho-D-ribosyl)imidazole-4-carboxylate from 5-amino-1-(5-phospho-D-ribosyl)imidazole (carboxylase route): step 1/1. The sequence is that of Phosphoribosylaminoimidazole carboxylase (ADE2) from Candida glabrata (strain ATCC 2001 / BCRC 20586 / JCM 3761 / NBRC 0622 / NRRL Y-65 / CBS 138) (Yeast).